The primary structure comprises 440 residues: Thymidine phosphorylase (440 aa).

Belongs to the thymidine/pyrimidine-nucleoside phosphorylase family. As to quaternary structure, homodimer.

It carries out the reaction thymidine + phosphate = 2-deoxy-alpha-D-ribose 1-phosphate + thymine. It functions in the pathway pyrimidine metabolism; dTMP biosynthesis via salvage pathway; dTMP from thymine: step 1/2. The enzymes which catalyze the reversible phosphorolysis of pyrimidine nucleosides are involved in the degradation of these compounds and in their utilization as carbon and energy sources, or in the rescue of pyrimidine bases for nucleotide synthesis. The polypeptide is Thymidine phosphorylase (Yersinia enterocolitica serotype O:8 / biotype 1B (strain NCTC 13174 / 8081)).